The chain runs to 359 residues: Aromatic amino acid aminotransferase (359 aa).

Over residues M1–L12 the composition is skewed to basic and acidic residues. The tract at residues M1–G21 is disordered. K223 carries the N6-(pyridoxal phosphate)lysine modification.

Belongs to the class-II pyridoxal-phosphate-dependent aminotransferase family. Homodimer. Requires pyridoxal 5'-phosphate as cofactor.

The enzyme catalyses an aromatic L-alpha-amino acid + 2-oxoglutarate = an aromatic oxo-acid + L-glutamate. Aminotransferase that catalyzes the conversion of aromatic amino acids and 2-oxoglutarate into corresponding aromatic oxo acids and L-glutamate. This chain is Aromatic amino acid aminotransferase, found in Streptomyces coelicolor (strain ATCC BAA-471 / A3(2) / M145).